Here is a 465-residue protein sequence, read N- to C-terminus: SET domain-containing protein 3 (465 aa).

Positions 18-265 constitute an SET domain; sequence DKVTVKWDKK…AREELLDSYG (248 aa).

This sequence belongs to the class V-like SAM-binding methyltransferase superfamily.

This is SET domain-containing protein 3 (set-3) from Caenorhabditis elegans.